Reading from the N-terminus, the 638-residue chain is Poly(A)-specific ribonuclease PARN (638 aa).

A divalent metal cation is bound by residues Asp-28 and Glu-30. Residues Arg-143–Asn-165 form a disordered region. The segment covering Gln-152–Asn-165 has biased composition (polar residues). Ser-163 and Ser-167 each carry phosphoserine. The R3H domain maps to Lys-178–Asp-245. Lys-220 carries the N6-acetyllysine modification. A divalent metal cation-binding residues include Asp-292 and Asp-382. Lys-499 is subject to N6-acetyllysine. Position 530 is a phosphoserine (Ser-530). A Phosphoserine; by MAPKAPK2 modification is found at Ser-557. Positions Arg-573 to Trp-638 are disordered. 2 positions are modified to phosphoserine: Ser-583 and Ser-587. Positions Lys-606 to Lys-615 are enriched in basic residues. 3 positions are modified to phosphoserine: Ser-619, Ser-623, and Ser-627.

This sequence belongs to the CAF1 family. As to quaternary structure, homodimer. Found in a mRNA decay complex with RENT1, RENT2 and RENT3B. Interacts with KHSRP. Interacts with CELF1/CUGBP1. Interacts with ZC3HAV1 in an RNA-independent manner. Interacts with DHX36. The cofactor is Mg(2+). Post-translationally, phosphorylation by MAPKAPK2, preventing GADD45A mRNA degradation after genotoxic stress.

The protein resides in the nucleus. Its subcellular location is the cytoplasm. It localises to the nucleolus. It carries out the reaction Exonucleolytic cleavage of poly(A) to 5'-AMP.. Its function is as follows. 3'-exoribonuclease that has a preference for poly(A) tails of mRNAs, thereby efficiently degrading poly(A) tails. Exonucleolytic degradation of the poly(A) tail is often the first step in the decay of eukaryotic mRNAs and is also used to silence certain maternal mRNAs translationally during oocyte maturation and early embryonic development. Involved in nonsense-mediated mRNA decay, a critical process of selective degradation of mRNAs that contain premature stop codons. Also involved in degradation of inherently unstable mRNAs that contain AU-rich elements (AREs) in their 3'-UTR, possibly via its interaction with KHSRP. Probably mediates the removal of poly(A) tails of AREs mRNAs, which constitutes the first step of destabilization. Interacts with both the 3'-end poly(A) tail and the 5'-end cap structure during degradation, the interaction with the cap structure being required for an efficient degradation of poly(A) tails. Also able to recognize poly(A) tails of microRNAs such as MIR21 and H/ACA box snoRNAs (small nucleolar RNAs) leading to microRNAs degradation or snoRNA increased stability. The polypeptide is Poly(A)-specific ribonuclease PARN (PARN) (Bos taurus (Bovine)).